Reading from the N-terminus, the 398-residue chain is Dual-specificity RNA methyltransferase RlmN (398 aa).

Glutamate 119 acts as the Proton acceptor in catalysis. Positions 125 to 364 (EADRATLCVS…TIVRKTRGDD (240 aa)) constitute a Radical SAM core domain. Cysteine 132 and cysteine 369 are joined by a disulfide. [4Fe-4S] cluster contacts are provided by cysteine 139, cysteine 143, and cysteine 146. S-adenosyl-L-methionine is bound by residues 193 to 194 (GE), serine 225, 247 to 249 (SLH), and asparagine 326. Residue cysteine 369 is the S-methylcysteine intermediate of the active site.

This sequence belongs to the radical SAM superfamily. RlmN family. [4Fe-4S] cluster is required as a cofactor.

The protein localises to the cytoplasm. It catalyses the reaction adenosine(2503) in 23S rRNA + 2 reduced [2Fe-2S]-[ferredoxin] + 2 S-adenosyl-L-methionine = 2-methyladenosine(2503) in 23S rRNA + 5'-deoxyadenosine + L-methionine + 2 oxidized [2Fe-2S]-[ferredoxin] + S-adenosyl-L-homocysteine. The enzyme catalyses adenosine(37) in tRNA + 2 reduced [2Fe-2S]-[ferredoxin] + 2 S-adenosyl-L-methionine = 2-methyladenosine(37) in tRNA + 5'-deoxyadenosine + L-methionine + 2 oxidized [2Fe-2S]-[ferredoxin] + S-adenosyl-L-homocysteine. Its function is as follows. Specifically methylates position 2 of adenine 2503 in 23S rRNA and position 2 of adenine 37 in tRNAs. m2A2503 modification seems to play a crucial role in the proofreading step occurring at the peptidyl transferase center and thus would serve to optimize ribosomal fidelity. The protein is Dual-specificity RNA methyltransferase RlmN of Yersinia pestis.